The chain runs to 662 residues: Probable quinol oxidase subunit 1 (662 aa).

2 helical membrane passes run 14–34 (WMIT…IAVI) and 58–78 (LMYL…ALLL). H102 lines the Fe(II)-heme a pocket. 8 consecutive transmembrane segments (helical) span residues 103 to 123 (GVIM…NVVV), 140 to 160 (ISFW…IIGG), 187 to 207 (VAIQ…FVTI), 228 to 248 (FITT…LALM), 273 to 293 (FFWV…FGIY), 311 to 331 (MVWA…HHFF), 336 to 356 (GALI…PTGV), and 376 to 396 (MLFS…GVML). The Cu cation site is built by H279, Y283, H328, and H329. The 1'-histidyl-3'-tyrosine (His-Tyr) cross-link spans 279 to 283 (HPEVY). Residue H414 coordinates heme a3. A run of 5 helical transmembrane segments spans residues 415–435 (FHYT…IFWY), 451–471 (CFWL…ILGL), 492–512 (VIST…VVSI), 586–605 (THTG…FLIF), and 609–628 (IPAA…QSFV). H416 contributes to the Fe(II)-heme a binding site.

It belongs to the heme-copper respiratory oxidase family. Cu cation is required as a cofactor. Ferriheme a serves as cofactor. The cofactor is Heme A3..

It localises to the cell membrane. It carries out the reaction 2 a quinol + O2 = 2 a quinone + 2 H2O. Its pathway is energy metabolism; oxidative phosphorylation. Catalyzes quinol oxidation with the concomitant reduction of oxygen to water. This Staphylococcus haemolyticus (strain JCSC1435) protein is Probable quinol oxidase subunit 1 (qoxB).